A 441-amino-acid polypeptide reads, in one-letter code: GTPase Der (441 aa).

EngA-type G domains follow at residues 4 to 168 and 177 to 352; these read PVVA…PEDI and IRIA…EQNS. Residues 10–17, 57–61, 121–124, 183–190, 230–234, and 295–298 each bind GTP; these read GRPNVGKS, DTGGI, NKVE, DTAGM, and NKWD. Positions 353-437 constitute a KH-like domain; that stretch reads TRVATATLNT…PIRMIVRQKD (85 aa).

It belongs to the TRAFAC class TrmE-Era-EngA-EngB-Septin-like GTPase superfamily. EngA (Der) GTPase family. As to quaternary structure, associates with the 50S ribosomal subunit.

GTPase that plays an essential role in the late steps of ribosome biogenesis. This chain is GTPase Der, found in Desulfitobacterium hafniense (strain DSM 10664 / DCB-2).